The sequence spans 226 residues: Small ribosomal subunit protein uS2c (226 aa).

It belongs to the universal ribosomal protein uS2 family.

It is found in the plastid. Its subcellular location is the chloroplast. In Phaeodactylum tricornutum (strain CCAP 1055/1), this protein is Small ribosomal subunit protein uS2c (rps2).